Consider the following 598-residue polypeptide: Inactive metallocarboxypeptidase ECM14 (598 aa).

An N-terminal signal peptide occupies residues 1-21; sequence MRLFTHGQVLALLAFVNTISA. Positions 22–174 are excised as a propeptide; that stretch reads IPSFSTNSYP…QTIYESYPSP (153 aa). The 321-residue stretch at 202-522 folds into the Peptidase M14 domain; that stretch reads NYQPLSVIVP…NAVMMLGRFL (321 aa). Residues His264 and Glu267 each contribute to the Zn(2+) site. Substrate-binding positions include 264 to 267, Arg322, and 339 to 340; these read HARE and DR. Cys333 and Cys356 form a disulfide bridge. Asn349 carries an N-linked (GlcNAc...) asparagine glycan. His396 is a binding site for Zn(2+). 397 to 398 serves as a coordination point for substrate; sequence SY. The tract at residues 539–598 is disordered; it reads QRPNKDDKPILNDDDDDDDADTNDDGIGRKDDSWIPDEYKGDNDRDESDGGWAFRRLRKR. Over residues 550–562 the composition is skewed to acidic residues; it reads NDDDDDDDADTND. Basic and acidic residues predominate over residues 564–581; sequence GIGRKDDSWIPDEYKGDN.

This sequence belongs to the peptidase M14 family. The cofactor is Zn(2+).

Its subcellular location is the vacuole. It is found in the secreted. Functionally, inactive carboxypeptidase that may play a role in cell wall organization and biogenesis. This Ajellomyces capsulatus (strain H143) (Darling's disease fungus) protein is Inactive metallocarboxypeptidase ECM14 (ECM14).